The following is a 365-amino-acid chain: Phospho-N-acetylmuramoyl-pentapeptide-transferase (365 aa).

The next 10 membrane-spanning stretches (helical) occupy residues 19–39 (TLLI…SSWA), 49–69 (LLIA…AVVP), 92–112 (AGTP…IAVV), 116–136 (FNPD…IGWV), 156–176 (LFLQ…YGPT), 183–203 (IMQF…FALV), 215–235 (VDGL…LLVA), 238–258 (NPAL…FVHH), 279–299 (LAAV…SGIF), and 345–365 (QIVG…MATA).

This sequence belongs to the glycosyltransferase 4 family. MraY subfamily. Mg(2+) is required as a cofactor.

It localises to the cell inner membrane. The catalysed reaction is UDP-N-acetyl-alpha-D-muramoyl-L-alanyl-gamma-D-glutamyl-meso-2,6-diaminopimeloyl-D-alanyl-D-alanine + di-trans,octa-cis-undecaprenyl phosphate = di-trans,octa-cis-undecaprenyl diphospho-N-acetyl-alpha-D-muramoyl-L-alanyl-D-glutamyl-meso-2,6-diaminopimeloyl-D-alanyl-D-alanine + UMP. It functions in the pathway cell wall biogenesis; peptidoglycan biosynthesis. In terms of biological role, catalyzes the initial step of the lipid cycle reactions in the biosynthesis of the cell wall peptidoglycan: transfers peptidoglycan precursor phospho-MurNAc-pentapeptide from UDP-MurNAc-pentapeptide onto the lipid carrier undecaprenyl phosphate, yielding undecaprenyl-pyrophosphoryl-MurNAc-pentapeptide, known as lipid I. In Synechocystis sp. (strain ATCC 27184 / PCC 6803 / Kazusa), this protein is Phospho-N-acetylmuramoyl-pentapeptide-transferase.